The sequence spans 373 residues: Lipoyl synthase (373 aa).

A disordered region spans residues 12 to 36 (HVVSNDHPSSSPLQPGVKQSGEDKI). [4Fe-4S] cluster contacts are provided by C81, C86, C92, C107, C111, C114, and S323. A Radical SAM core domain is found at 93–312 (FSHGTATFMI…EEYGMALGFS (220 aa)). The segment at 346–373 (PAVSSTEHRERHTIASKSASKTESIRHR) is disordered.

The protein belongs to the radical SAM superfamily. Lipoyl synthase family. It depends on [4Fe-4S] cluster as a cofactor.

It localises to the cytoplasm. It carries out the reaction [[Fe-S] cluster scaffold protein carrying a second [4Fe-4S](2+) cluster] + N(6)-octanoyl-L-lysyl-[protein] + 2 oxidized [2Fe-2S]-[ferredoxin] + 2 S-adenosyl-L-methionine + 4 H(+) = [[Fe-S] cluster scaffold protein] + N(6)-[(R)-dihydrolipoyl]-L-lysyl-[protein] + 4 Fe(3+) + 2 hydrogen sulfide + 2 5'-deoxyadenosine + 2 L-methionine + 2 reduced [2Fe-2S]-[ferredoxin]. It functions in the pathway protein modification; protein lipoylation via endogenous pathway; protein N(6)-(lipoyl)lysine from octanoyl-[acyl-carrier-protein]: step 2/2. Catalyzes the radical-mediated insertion of two sulfur atoms into the C-6 and C-8 positions of the octanoyl moiety bound to the lipoyl domains of lipoate-dependent enzymes, thereby converting the octanoylated domains into lipoylated derivatives. The chain is Lipoyl synthase from Xylella fastidiosa (strain 9a5c).